The following is a 99-amino-acid chain: Large ribosomal subunit protein uL23 (99 aa).

It belongs to the universal ribosomal protein uL23 family. As to quaternary structure, part of the 50S ribosomal subunit. Contacts protein L29, and trigger factor when it is bound to the ribosome.

In terms of biological role, one of the early assembly proteins it binds 23S rRNA. One of the proteins that surrounds the polypeptide exit tunnel on the outside of the ribosome. Forms the main docking site for trigger factor binding to the ribosome. The chain is Large ribosomal subunit protein uL23 from Rhodopseudomonas palustris (strain BisB18).